Reading from the N-terminus, the 258-residue chain is Indole-3-glycerol phosphate synthase (258 aa).

The protein belongs to the TrpC family.

The catalysed reaction is 1-(2-carboxyphenylamino)-1-deoxy-D-ribulose 5-phosphate + H(+) = (1S,2R)-1-C-(indol-3-yl)glycerol 3-phosphate + CO2 + H2O. It participates in amino-acid biosynthesis; L-tryptophan biosynthesis; L-tryptophan from chorismate: step 4/5. The protein is Indole-3-glycerol phosphate synthase of Chlorobium limicola (strain DSM 245 / NBRC 103803 / 6330).